The chain runs to 199 residues: IPVCPRGSVRCQVSLPDLFDRAVMLSHYIHSLSSDMFHEFNKQYALGRGFIPRAINSCHTSSISTPEDKDQAQQTHHEVLMDLILGLLRSWNDPLDHLASEVHSLPKAPSALLTKATEVKEENQRLLEGIEKIVDQVHPGAKENKAYSVWSGLPSLQTTDEDARLFAFYNLFRCLRRDSHKIDSYLKLLKCRIVYNNNC.

Cysteines 4 and 11 form a disulfide. Phosphoserine is present on residues serine 26, serine 34, and serine 90. 2 disulfide bridges follow: cysteine 58/cysteine 174 and cysteine 191/cysteine 199.

This sequence belongs to the somatotropin/prolactin family. Interacts with PRLR.

It localises to the secreted. In terms of biological role, prolactin acts primarily on the mammary gland by promoting lactation. The protein is Prolactin (PRL) of Loxodonta africana (African elephant).